The following is a 248-amino-acid chain: Enolase-phosphatase E1 (248 aa).

Mg(2+) contacts are provided by Asp-14 and Glu-16. Substrate is bound by residues 145–146 (SS) and Lys-179. Residue Asp-204 coordinates Mg(2+).

Belongs to the HAD-like hydrolase superfamily. MasA/MtnC family. As to quaternary structure, monomer. Requires Mg(2+) as cofactor.

The protein resides in the cytoplasm. Its subcellular location is the nucleus. It carries out the reaction 5-methylsulfanyl-2,3-dioxopentyl phosphate + H2O = 1,2-dihydroxy-5-(methylsulfanyl)pent-1-en-3-one + phosphate. It participates in amino-acid biosynthesis; L-methionine biosynthesis via salvage pathway; L-methionine from S-methyl-5-thio-alpha-D-ribose 1-phosphate: step 3/6. The protein operates within amino-acid biosynthesis; L-methionine biosynthesis via salvage pathway; L-methionine from S-methyl-5-thio-alpha-D-ribose 1-phosphate: step 4/6. In terms of biological role, bifunctional enzyme that catalyzes the enolization of 2,3-diketo-5-methylthiopentyl-1-phosphate (DK-MTP-1-P) into the intermediate 2-hydroxy-3-keto-5-methylthiopentenyl-1-phosphate (HK-MTPenyl-1-P), which is then dephosphorylated to form the acireductone 1,2-dihydroxy-3-keto-5-methylthiopentene (DHK-MTPene). The sequence is that of Enolase-phosphatase E1 from Caenorhabditis elegans.